The chain runs to 495 residues: Aspartyl/glutamyl-tRNA(Asn/Gln) amidotransferase subunit B (495 aa).

This sequence belongs to the GatB/GatE family. GatB subfamily. In terms of assembly, heterotrimer of A, B and C subunits.

The enzyme catalyses L-glutamyl-tRNA(Gln) + L-glutamine + ATP + H2O = L-glutaminyl-tRNA(Gln) + L-glutamate + ADP + phosphate + H(+). The catalysed reaction is L-aspartyl-tRNA(Asn) + L-glutamine + ATP + H2O = L-asparaginyl-tRNA(Asn) + L-glutamate + ADP + phosphate + 2 H(+). Allows the formation of correctly charged Asn-tRNA(Asn) or Gln-tRNA(Gln) through the transamidation of misacylated Asp-tRNA(Asn) or Glu-tRNA(Gln) in organisms which lack either or both of asparaginyl-tRNA or glutaminyl-tRNA synthetases. The reaction takes place in the presence of glutamine and ATP through an activated phospho-Asp-tRNA(Asn) or phospho-Glu-tRNA(Gln). This is Aspartyl/glutamyl-tRNA(Asn/Gln) amidotransferase subunit B from Methanosarcina barkeri (strain Fusaro / DSM 804).